The following is a 421-amino-acid chain: Early growth response protein 2 (421 aa).

The span at 127-145 (CSSTSSSNASSGSPNLSCS) shows a compositional bias: low complexity. Disordered stretches follow at residues 127-152 (CSST…PQSD), 179-200 (SPTA…ASDG), and 223-288 (SDRK…ERPY). The segment covering 236 to 247 (PLSTIRNFTLGG) has biased composition (polar residues). 3 consecutive C2H2-type zinc fingers follow at residues 288–312 (YPCP…IRIH), 318–340 (FQCR…IRTH), and 346–368 (FACD…TKIH).

The protein belongs to the EGR C2H2-type zinc-finger protein family.

It localises to the nucleus. Functionally, sequence-specific DNA-binding transcription factor. The sequence is that of Early growth response protein 2 (egr2) from Xenopus laevis (African clawed frog).